A 259-amino-acid polypeptide reads, in one-letter code: 7-cyano-7-deazaguanine synthase (259 aa).

32-42 (LSGGLDSVTCL) lines the ATP pocket. Cysteine 223, cysteine 233, cysteine 236, and cysteine 239 together coordinate Zn(2+).

It belongs to the QueC family. Zn(2+) serves as cofactor.

It carries out the reaction 7-carboxy-7-deazaguanine + NH4(+) + ATP = 7-cyano-7-deazaguanine + ADP + phosphate + H2O + H(+). Its pathway is purine metabolism; 7-cyano-7-deazaguanine biosynthesis. Catalyzes the ATP-dependent conversion of 7-carboxy-7-deazaguanine (CDG) to 7-cyano-7-deazaguanine (preQ(0)). The chain is 7-cyano-7-deazaguanine synthase from Psychrobacter arcticus (strain DSM 17307 / VKM B-2377 / 273-4).